A 418-amino-acid chain; its full sequence is Glutamyl-tRNA reductase (418 aa).

Residues 49 to 52 (TCNR), Ser109, 114 to 116 (EPQ), and Gln120 each bind substrate. Residue Cys50 is the Nucleophile of the active site. 189–194 (GAGETI) lines the NADP(+) pocket.

It belongs to the glutamyl-tRNA reductase family. Homodimer.

It catalyses the reaction (S)-4-amino-5-oxopentanoate + tRNA(Glu) + NADP(+) = L-glutamyl-tRNA(Glu) + NADPH + H(+). It functions in the pathway porphyrin-containing compound metabolism; protoporphyrin-IX biosynthesis; 5-aminolevulinate from L-glutamyl-tRNA(Glu): step 1/2. Its function is as follows. Catalyzes the NADPH-dependent reduction of glutamyl-tRNA(Glu) to glutamate 1-semialdehyde (GSA). This is Glutamyl-tRNA reductase from Escherichia coli O6:K15:H31 (strain 536 / UPEC).